Here is a 152-residue protein sequence, read N- to C-terminus: Ribosome maturation factor RimP (152 aa).

The protein belongs to the RimP family.

Its subcellular location is the cytoplasm. In terms of biological role, required for maturation of 30S ribosomal subunits. This chain is Ribosome maturation factor RimP, found in Fervidobacterium nodosum (strain ATCC 35602 / DSM 5306 / Rt17-B1).